A 217-amino-acid chain; its full sequence is GTPase IMAP family member GIMD1 (217 aa).

An AIG1-type G domain is found at 6 to 217; the sequence is KMIINLAVFG…ENHFQVLSLA (212 aa). GTP contacts are provided by residues 15–23, Ser36, and 148–150; these read GRTQSGKSS and HAE.

This sequence belongs to the TRAFAC class TrmE-Era-EngA-EngB-Septin-like GTPase superfamily. AIG1/Toc34/Toc159-like paraseptin GTPase family. IAN subfamily.

This is GTPase IMAP family member GIMD1 (Gimd1) from Mus musculus (Mouse).